Reading from the N-terminus, the 118-residue chain is MEVGIDIVSLERIEVLYSRYGVRFLEKILLPEEVALCLQKPQIVASVAGRFAAKEAIVKALGSGFAQGVHWKSFAILNDAAGRPYVKVIDDECLPPSSVVKLSISHDRHSAVAVAIIE.

Residues D6 and E55 each contribute to the Mg(2+) site.

This sequence belongs to the P-Pant transferase superfamily. AcpS family. It depends on Mg(2+) as a cofactor.

It is found in the cytoplasm. The enzyme catalyses apo-[ACP] + CoA = holo-[ACP] + adenosine 3',5'-bisphosphate + H(+). In terms of biological role, transfers the 4'-phosphopantetheine moiety from coenzyme A to a Ser of acyl-carrier-protein. The protein is Holo-[acyl-carrier-protein] synthase of Chlorobium chlorochromatii (strain CaD3).